The primary structure comprises 595 residues: Aspartate--tRNA(Asp/Asn) ligase (595 aa).

Glu174 is an L-aspartate binding site. The tract at residues Gln198–Lys201 is aspartate. Position 220 (Arg220) interacts with L-aspartate. Residues Arg220 to Glu222 and Gln229 each bind ATP. L-aspartate is bound at residue His452. Glu486 lines the ATP pocket. Residue Arg493 participates in L-aspartate binding. An ATP-binding site is contributed by Gly538–Arg541.

This sequence belongs to the class-II aminoacyl-tRNA synthetase family. Type 1 subfamily. As to quaternary structure, homodimer.

It localises to the cytoplasm. The catalysed reaction is tRNA(Asx) + L-aspartate + ATP = L-aspartyl-tRNA(Asx) + AMP + diphosphate. Functionally, aspartyl-tRNA synthetase with relaxed tRNA specificity since it is able to aspartylate not only its cognate tRNA(Asp) but also tRNA(Asn). Reaction proceeds in two steps: L-aspartate is first activated by ATP to form Asp-AMP and then transferred to the acceptor end of tRNA(Asp/Asn). In Nitrosococcus oceani (strain ATCC 19707 / BCRC 17464 / JCM 30415 / NCIMB 11848 / C-107), this protein is Aspartate--tRNA(Asp/Asn) ligase.